The primary structure comprises 474 residues: tRNA-2-methylthio-N(6)-dimethylallyladenosine synthase (474 aa).

Positions 3-120 (KKLHIKTWGC…LPEMINSVRG (118 aa)) constitute an MTTase N-terminal domain. Positions 12, 49, 83, 157, 161, and 164 each coordinate [4Fe-4S] cluster. One can recognise a Radical SAM core domain in the interval 143–375 (RAEGPTAFVS…QERINQQAMA (233 aa)). One can recognise a TRAM domain in the interval 378–441 (RRMLGTTQRI…PNSLRGKVVR (64 aa)).

Belongs to the methylthiotransferase family. MiaB subfamily. Monomer. It depends on [4Fe-4S] cluster as a cofactor.

The protein localises to the cytoplasm. It carries out the reaction N(6)-dimethylallyladenosine(37) in tRNA + (sulfur carrier)-SH + AH2 + 2 S-adenosyl-L-methionine = 2-methylsulfanyl-N(6)-dimethylallyladenosine(37) in tRNA + (sulfur carrier)-H + 5'-deoxyadenosine + L-methionine + A + S-adenosyl-L-homocysteine + 2 H(+). The catalysed reaction is N(6)-dimethylallyladenosine(37) in tRNA + (sulfur carrier)-SH + AH2 + S-adenosyl-L-methionine = 2-thio-N(6)-dimethylallyladenosine(37) in tRNA + (sulfur carrier)-H + 5'-deoxyadenosine + L-methionine + A + H(+). The enzyme catalyses 2-thio-N(6)-dimethylallyladenosine(37) in tRNA + S-adenosyl-L-methionine = 2-methylsulfanyl-N(6)-dimethylallyladenosine(37) in tRNA + S-adenosyl-L-homocysteine + H(+). Functionally, catalyzes the methylthiolation of N6-(dimethylallyl)adenosine (i(6)A), leading to the formation of 2-methylthio-N6-(dimethylallyl)adenosine (ms(2)i(6)A) at position 37 in tRNAs that read codons beginning with uridine. The sequence is that of tRNA-2-methylthio-N(6)-dimethylallyladenosine synthase from Salmonella typhimurium (strain LT2 / SGSC1412 / ATCC 700720).